Reading from the N-terminus, the 424-residue chain is Enolase (424 aa).

(2R)-2-phosphoglycerate is bound at residue Gln162. Residue Glu204 is the Proton donor of the active site. The Mg(2+) site is built by Asp241, Glu284, and Asp311. Positions 336, 365, 366, and 387 each coordinate (2R)-2-phosphoglycerate. Catalysis depends on Lys336, which acts as the Proton acceptor.

The protein belongs to the enolase family. It depends on Mg(2+) as a cofactor.

The protein localises to the cytoplasm. Its subcellular location is the secreted. The protein resides in the cell surface. It catalyses the reaction (2R)-2-phosphoglycerate = phosphoenolpyruvate + H2O. The protein operates within carbohydrate degradation; glycolysis; pyruvate from D-glyceraldehyde 3-phosphate: step 4/5. Functionally, catalyzes the reversible conversion of 2-phosphoglycerate (2-PG) into phosphoenolpyruvate (PEP). It is essential for the degradation of carbohydrates via glycolysis. The polypeptide is Enolase (Agrobacterium fabrum (strain C58 / ATCC 33970) (Agrobacterium tumefaciens (strain C58))).